The following is a 196-amino-acid chain: Probable peptidyl-prolyl cis-trans isomerase (196 aa).

A signal peptide spans M1–A26. The PPIase cyclophilin-type domain occupies P29 to D194.

The protein belongs to the cyclophilin-type PPIase family.

It localises to the periplasm. It carries out the reaction [protein]-peptidylproline (omega=180) = [protein]-peptidylproline (omega=0). Its function is as follows. PPIases accelerate the folding of proteins. It catalyzes the cis-trans isomerization of proline imidic peptide bonds in oligopeptides. This is Probable peptidyl-prolyl cis-trans isomerase (ppi) from Brucella melitensis biotype 1 (strain ATCC 23456 / CCUG 17765 / NCTC 10094 / 16M).